Consider the following 684-residue polypeptide: Glycine--tRNA ligase beta subunit (684 aa).

The protein belongs to the class-II aminoacyl-tRNA synthetase family. As to quaternary structure, tetramer of two alpha and two beta subunits.

It is found in the cytoplasm. It catalyses the reaction tRNA(Gly) + glycine + ATP = glycyl-tRNA(Gly) + AMP + diphosphate. In Pseudomonas syringae pv. syringae (strain B728a), this protein is Glycine--tRNA ligase beta subunit.